Reading from the N-terminus, the 150-residue chain is Troponin C, isoform 2A (150 aa).

Methionine 1 bears the N-acetylmethionine mark. EF-hand domains lie at 7–42, 43–78, 83–118, and 119–150; these read EQIGALQKAFDSFDTDSKGFITPETVGVILRMMGVK, ISEKNLQEVIAETDEDGSGELEFEEFVELAAKFLIE, ALKTELREAFRVYDKEGNGYITTDVLKEILRELDNR, and LTEEDLDSIIEEVDEDGSGTLDFNEFMEMMNG. The Ca(2+) site is built by aspartate 56, aspartate 58, serine 60, glutamate 62, and glutamate 67. The Ca(2+) site is built by aspartate 132, aspartate 134, serine 136, threonine 138, and glutamate 143.

It belongs to the troponin C family.

Troponin is the central regulatory protein of striated muscle contraction. Tn consists of three components: Tn-I which is the inhibitor of actomyosin ATPase, Tn-T which contains the binding site for tropomyosin and Tn-C. The binding of calcium to Tn-C abolishes the inhibitory action of Tn on actin filaments. In Homarus americanus (American lobster), this protein is Troponin C, isoform 2A.